Reading from the N-terminus, the 196-residue chain is Probable phosphoheptose isomerase (196 aa).

An SIS domain is found at 43–196 (IVNVFNSGGK…MICSVIDSYY (154 aa)). Substrate is bound at residue 58 to 60 (NGG). Zn(2+) contacts are provided by H67 and E71. Substrate contacts are provided by residues E71, 100–101 (ND), 126–128 (STS), S131, and Q178. Residues Q178 and H186 each contribute to the Zn(2+) site.

Belongs to the SIS family. GmhA subfamily. It depends on Zn(2+) as a cofactor.

The protein resides in the cytoplasm. The catalysed reaction is 2 D-sedoheptulose 7-phosphate = D-glycero-alpha-D-manno-heptose 7-phosphate + D-glycero-beta-D-manno-heptose 7-phosphate. Its pathway is carbohydrate biosynthesis; D-glycero-D-manno-heptose 7-phosphate biosynthesis; D-glycero-alpha-D-manno-heptose 7-phosphate and D-glycero-beta-D-manno-heptose 7-phosphate from sedoheptulose 7-phosphate: step 1/1. In terms of biological role, catalyzes the isomerization of sedoheptulose 7-phosphate in D-glycero-D-manno-heptose 7-phosphate. This is Probable phosphoheptose isomerase from Thermoplasma volcanium (strain ATCC 51530 / DSM 4299 / JCM 9571 / NBRC 15438 / GSS1).